We begin with the raw amino-acid sequence, 318 residues long: Acetyl-coenzyme A carboxylase carboxyl transferase subunit alpha (318 aa).

A CoA carboxyltransferase C-terminal domain is found at 39–293; it reads KLEKKVDKMR…HEALARHLKE (255 aa).

It belongs to the AccA family. Acetyl-CoA carboxylase is a heterohexamer composed of biotin carboxyl carrier protein (AccB), biotin carboxylase (AccC) and two subunits each of ACCase subunit alpha (AccA) and ACCase subunit beta (AccD).

It localises to the cytoplasm. It carries out the reaction N(6)-carboxybiotinyl-L-lysyl-[protein] + acetyl-CoA = N(6)-biotinyl-L-lysyl-[protein] + malonyl-CoA. It participates in lipid metabolism; malonyl-CoA biosynthesis; malonyl-CoA from acetyl-CoA: step 1/1. Its function is as follows. Component of the acetyl coenzyme A carboxylase (ACC) complex. First, biotin carboxylase catalyzes the carboxylation of biotin on its carrier protein (BCCP) and then the CO(2) group is transferred by the carboxyltransferase to acetyl-CoA to form malonyl-CoA. The polypeptide is Acetyl-coenzyme A carboxylase carboxyl transferase subunit alpha (Geobacter metallireducens (strain ATCC 53774 / DSM 7210 / GS-15)).